The sequence spans 447 residues: Chromosomal replication initiator protein DnaA (447 aa).

The segment at 1 to 79 is domain I, interacts with DnaA modulators; it reads MVSCENLWQQ…TGQEITVKLI (79 aa). Residues 79–105 form a domain II region; it reads ITDGLEPHSLIGQESSLPMETTPKNAT. Positions 106-322 are domain III, AAA+ region; the sequence is ALNGKYTFSR…GALIRAIAYT (217 aa). ATP contacts are provided by glycine 150, glycine 152, lysine 153, and threonine 154. Residues 323–447 are domain IV, binds dsDNA; it reads SLSNVAMTVE…INIAGQAPES (125 aa).

Belongs to the DnaA family. As to quaternary structure, oligomerizes as a right-handed, spiral filament on DNA at oriC.

Its subcellular location is the cytoplasm. Functionally, plays an essential role in the initiation and regulation of chromosomal replication. ATP-DnaA binds to the origin of replication (oriC) to initiate formation of the DNA replication initiation complex once per cell cycle. Binds the DnaA box (a 9 base pair repeat at the origin) and separates the double-stranded (ds)DNA. Forms a right-handed helical filament on oriC DNA; dsDNA binds to the exterior of the filament while single-stranded (ss)DNA is stabiized in the filament's interior. The ATP-DnaA-oriC complex binds and stabilizes one strand of the AT-rich DNA unwinding element (DUE), permitting loading of DNA polymerase. After initiation quickly degrades to an ADP-DnaA complex that is not apt for DNA replication. Binds acidic phospholipids. Its function is as follows. Isolated domain IV (residues 348-447) binds both E.coli and B.subtilis oriC. This Synechocystis sp. (strain ATCC 27184 / PCC 6803 / Kazusa) protein is Chromosomal replication initiator protein DnaA.